The following is a 199-amino-acid chain: MSSDTRPALILGSSSPYRRELLSRLRIPFEVATPDIDETPLAGERPAATALRLSRLKAEAIAALHAGALVIGSDQVCTLDDQQIGKPGTHAKALAQLQLMRGRTVTFHSALCLLDGRTGEAQIADIQTHATFRNLSDAELDAYLRLETPYDCAGSAKVEGLGIMLLERVESDDPTALIGLPLIALTGMLRHAGYPCFGA.

Asp74 serves as the catalytic Proton acceptor.

The protein belongs to the Maf family. YceF subfamily. It depends on a divalent metal cation as a cofactor.

The protein resides in the cytoplasm. It catalyses the reaction N(7)-methyl-GTP + H2O = N(7)-methyl-GMP + diphosphate + H(+). Functionally, nucleoside triphosphate pyrophosphatase that hydrolyzes 7-methyl-GTP (m(7)GTP). May have a dual role in cell division arrest and in preventing the incorporation of modified nucleotides into cellular nucleic acids. In Cupriavidus metallidurans (strain ATCC 43123 / DSM 2839 / NBRC 102507 / CH34) (Ralstonia metallidurans), this protein is 7-methyl-GTP pyrophosphatase.